Here is a 157-residue protein sequence, read N- to C-terminus: MAPKTEPGRRVVADNRSARFHYAIEDTFEAGIALTGTEVKSLRGGKATIGESYAGPSGNDLMLFNAYIPEYLEANRFNHDTKRPRRLLLHRRQINKLIGATQRQGYTVIPLKIYFNDKGRAKVELGLGKGKQLHDKRESVKQRDWQRDKARLMRDKG.

The segment at 131–157 (KQLHDKRESVKQRDWQRDKARLMRDKG) is disordered. Basic and acidic residues predominate over residues 132–157 (QLHDKRESVKQRDWQRDKARLMRDKG).

The protein belongs to the SmpB family.

The protein resides in the cytoplasm. Required for rescue of stalled ribosomes mediated by trans-translation. Binds to transfer-messenger RNA (tmRNA), required for stable association of tmRNA with ribosomes. tmRNA and SmpB together mimic tRNA shape, replacing the anticodon stem-loop with SmpB. tmRNA is encoded by the ssrA gene; the 2 termini fold to resemble tRNA(Ala) and it encodes a 'tag peptide', a short internal open reading frame. During trans-translation Ala-aminoacylated tmRNA acts like a tRNA, entering the A-site of stalled ribosomes, displacing the stalled mRNA. The ribosome then switches to translate the ORF on the tmRNA; the nascent peptide is terminated with the 'tag peptide' encoded by the tmRNA and targeted for degradation. The ribosome is freed to recommence translation, which seems to be the essential function of trans-translation. This Methylorubrum populi (strain ATCC BAA-705 / NCIMB 13946 / BJ001) (Methylobacterium populi) protein is SsrA-binding protein.